The following is a 764-amino-acid chain: Complement factor B (764 aa).

An N-terminal signal peptide occupies residues 1 to 25; it reads MGSNLSPQLCLMPFILGLLSGGVTT. Sushi domains are found at residues 35–100, 101–160, and 163–220; these read ESCS…ECRA, IHCP…ICDN, and GYCS…SCQD. 6 disulfides stabilise this stretch: C37/C76, C62/C98, C103/C145, C131/C158, C165/C205, and C191/C218. 2 N-linked (GlcNAc...) asparagine glycosylation sites follow: N122 and N142. In terms of domain architecture, VWFA spans 270–469; the sequence is NIYLVLDGSD…NLEDVFYQMI (200 aa). Positions 278 and 280 each coordinate Mg(2+). N-linked (GlcNAc...) asparagine glycosylation is present at N285. Residue T353 coordinates Mg(2+). A glycan (N-linked (GlcNAc...) asparagine) is linked at N378. The Peptidase S1 domain occupies 477–757; sequence LCGMVWEHRK…VLPWLKEKLQ (281 aa). 5 disulfides stabilise this stretch: C478/C596, C511/C527, C599/C615, C656/C682, and C695/C725. Residues H526 and D576 each act as charge relay system in the active site. S699 (charge relay system) is an active-site residue.

Belongs to the peptidase S1 family. As to quaternary structure, monomer. Interacts with complement C3b; this interaction is dependent on the presence of Mg(2+). Catalytic component of the C3 convertase of the alternative complement pathway, also named C3bBb, composed of complement factor B Bb and complement C3b. Catalytic component of the C5 convertase of the alternative complement pathway, also named C3bBb3b, composed of complement factor B Bb and additional molecules of complement C3b. Interacts to CFP; this interaction contributes to the stabilization of the active C3-convertase enzyme complex. Mg(2+) is required as a cofactor. The cofactor is Mn(2+). Post-translationally, cleaved by CFD following activation of the alternative complement system, generating Ba and Bb chains. Cleavage and activation takes place when CFB is already associated with complement C3b.

The protein localises to the secreted. Its subcellular location is the cell surface. It catalyses the reaction Cleavage of Arg-|-Ser bond in complement component C3 alpha-chain to yield C3a and C3b, and Arg-|-Xaa bond in complement component C5 alpha-chain to yield C5a and C5b.. Its function is as follows. Precursor of the catalytic component of the C3 and C5 convertase complexes of the alternative pathway of the complement system, a cascade of proteins that leads to phagocytosis and breakdown of pathogens and signaling that strengthens the adaptive immune system. The alternative complement pathway acts as an amplification loop that enhances other complement pathways (classical, lectin and GZMK) by promoting formation of additional C3 and C5 convertases. CFB is cleaved and activated by CFD to generate Ba and Bb chains; Bb chain constituting the catalytic component of the C3 and C5 convertases. In terms of biological role, serine protease component of the complement C3 and C5 convertase complexes of the alternative complement pathway. Following cleavage and activation by factor D (CFD), forms the C3 convertase together with complement C3b. As part of the C3 convertase, cleaves and activates C3 into C3a anaphylatoxin and C3b opsonin, the next components of the complement pathways. When an additional complement C3b molecule binds to the C3 convertase, forms the C5 convertase, which cleaves and activates C5 into C5a anaphylatoxin and C5b component of the membrane attack complex. Involved in proliferation and differentiation of preactivated B-lymphocytes, rapid spreading of peripheral blood monocytes, stimulation of lymphocyte blastogenesis and lysis of erythrocytes. In Pan troglodytes (Chimpanzee), this protein is Complement factor B (CFB).